The primary structure comprises 101 residues: Small ribosomal subunit protein bS18c (101 aa).

Residues 1 to 19 (MDKSKQLFRKSKGSFRRRL) show a composition bias toward basic residues. The interval 1–23 (MDKSKQLFRKSKGSFRRRLPPIG) is disordered.

This sequence belongs to the bacterial ribosomal protein bS18 family. In terms of assembly, part of the 30S ribosomal subunit.

The protein localises to the plastid. The protein resides in the chloroplast. The chain is Small ribosomal subunit protein bS18c from Acorus gramineus (Dwarf sweet flag).